A 559-amino-acid chain; its full sequence is DNA ligase (559 aa).

Glu247 contacts ATP. Lys249 acts as the N6-AMP-lysine intermediate in catalysis. Arg254, Arg269, Glu299, Phe339, Arg414, and Lys420 together coordinate ATP.

Belongs to the ATP-dependent DNA ligase family. It depends on Mg(2+) as a cofactor.

The catalysed reaction is ATP + (deoxyribonucleotide)n-3'-hydroxyl + 5'-phospho-(deoxyribonucleotide)m = (deoxyribonucleotide)n+m + AMP + diphosphate.. DNA ligase that seals nicks in double-stranded DNA during DNA replication, DNA recombination and DNA repair. The protein is DNA ligase of Pyrococcus abyssi (strain GE5 / Orsay).